Consider the following 117-residue polypeptide: Large ribosomal subunit protein bL20 (117 aa).

The protein belongs to the bacterial ribosomal protein bL20 family.

Binds directly to 23S ribosomal RNA and is necessary for the in vitro assembly process of the 50S ribosomal subunit. It is not involved in the protein synthesizing functions of that subunit. This Leptospira interrogans serogroup Icterohaemorrhagiae serovar copenhageni (strain Fiocruz L1-130) protein is Large ribosomal subunit protein bL20.